A 29-amino-acid chain; its full sequence is Brevinin-2Rd (29 aa).

C23 and C29 are disulfide-bonded.

Expressed by the skin glands.

The protein localises to the secreted. Functionally, antimicrobial peptide. The chain is Brevinin-2Rd from Pelophylax ridibundus (Marsh frog).